The following is a 555-amino-acid chain: GPI-anchor transamidase component PIGS (555 aa).

Residues 2 to 18 (ATAGAAATDLEVVRGKR) lie on the Cytoplasmic side of the membrane. 2 residues coordinate a cardiolipin: R15 and R18. The chain crosses the membrane as a helical span at residues 19–39 (AALFFAAVAILLGLPLWWKTT). Residues 40–517 (ETYRAPLPYS…LHLLYFPDDQ (478 aa)) lie on the Lumenal side of the membrane. 2 N-linked (GlcNAc...) asparagine glycosylation sites follow: N267 and N370. A helical membrane pass occupies residues 518–532 (KFAIYIPLFLPMAVP). Residues 533-555 (ILLSLVKIFLETHKSWKKPEKID) are Cytoplasmic-facing.

This sequence belongs to the PIGS family. As to quaternary structure, heteropentamer. Part of the GPI-anchor transamidase complex, consisting of PIGK, PIGT, PIGS, PIGU and GAA1.

The protein resides in the endoplasmic reticulum membrane. It functions in the pathway glycolipid biosynthesis; glycosylphosphatidylinositol-anchor biosynthesis. Its function is as follows. Component of the glycosylphosphatidylinositol-anchor (GPI-anchor) transamidase (GPI-T) complex that catalyzes the formation of the linkage between a proprotein and a GPI-anchor and participates in GPI anchored protein biosynthesis. The sequence is that of GPI-anchor transamidase component PIGS from Rattus norvegicus (Rat).